A 294-amino-acid polypeptide reads, in one-letter code: rRNA 2'-O-methyltransferase fibrillarin (294 aa).

Positions Met1–Gly62 are disordered. Positions Gly20–Gly56 are enriched in gly residues. An asymmetric dimethylarginine mark is found at Arg27, Arg47, and Arg61. Residues Thr151–Thr152, Glu170–Phe171, Asp195–Ala196, and Asp215–Gln218 each bind S-adenosyl-L-methionine.

This sequence belongs to the methyltransferase superfamily. Fibrillarin family. In terms of assembly, component of box C/D small nucleolar ribonucleoprotein (snoRNP) particles. It is associated with the U3, U8 and U13 small nuclear RNAs. Post-translationally, by homology to other fibrillarins, some or all of the N-terminal domain arginines are modified to asymmetric dimethylarginine (DMA).

It is found in the nucleus. The protein localises to the nucleolus. The catalysed reaction is L-glutaminyl-[histone H2A] + S-adenosyl-L-methionine = N(5)-methyl-L-glutaminyl-[histone H2A] + S-adenosyl-L-homocysteine + H(+). Functionally, S-adenosyl-L-methionine-dependent methyltransferase that has the ability to methylate both RNAs and proteins. Involved in pre-rRNA processing. Utilizes the methyl donor S-adenosyl-L-methionine to catalyze the site-specific 2'-hydroxyl methylation of ribose moieties in pre-ribosomal RNA. Site specificity is provided by a guide RNA that base pairs with the substrate. Methylation occurs at a characteristic distance from the sequence involved in base pairing with the guide RNA. Also acts as a protein methyltransferase by mediating methylation of 'Gln-105' of histone H2A (H2AQ105me), a modification that impairs binding of the FACT complex and is specifically present at 35S ribosomal DNA locus. This Tetrahymena thermophila protein is rRNA 2'-O-methyltransferase fibrillarin (FIB).